The chain runs to 154 residues: Putative glutamine amidotransferase-like protein RP712 (154 aa).

Residues Met-1–Lys-94 form the Glutamine amidotransferase type-1 domain.

The chain is Putative glutamine amidotransferase-like protein RP712 from Rickettsia prowazekii (strain Madrid E).